The primary structure comprises 284 residues: Putative ABC transporter ATP-binding protein sll0385 (284 aa).

The ABC transporter domain maps to 51 to 278 (IRVRELSFAY…QTLMESHGLE (228 aa)). 84–91 (GHNGCGKT) provides a ligand contact to ATP.

The protein belongs to the ABC transporter superfamily.

It is found in the cell inner membrane. Its function is as follows. Probably part of an ABC transporter complex. Responsible for energy coupling to the transport system. The chain is Putative ABC transporter ATP-binding protein sll0385 from Synechocystis sp. (strain ATCC 27184 / PCC 6803 / Kazusa).